We begin with the raw amino-acid sequence, 121 residues long: Large ribosomal subunit protein uL14c (121 aa).

It belongs to the universal ribosomal protein uL14 family. Part of the 50S ribosomal subunit.

Its subcellular location is the plastid. The protein localises to the apicoplast. Functionally, binds to 23S rRNA. This Toxoplasma gondii protein is Large ribosomal subunit protein uL14c (rpl14).